The following is a 293-amino-acid chain: NAD kinase (293 aa).

Residue Asp-72 is the Proton acceptor of the active site. NAD(+)-binding positions include 72 to 73, 146 to 147, Arg-157, Arg-174, Asp-176, 187 to 192, and Gln-247; these read DG, ND, and TAYALS.

This sequence belongs to the NAD kinase family. The cofactor is a divalent metal cation.

It is found in the cytoplasm. It catalyses the reaction NAD(+) + ATP = ADP + NADP(+) + H(+). Involved in the regulation of the intracellular balance of NAD and NADP, and is a key enzyme in the biosynthesis of NADP. Catalyzes specifically the phosphorylation on 2'-hydroxyl of the adenosine moiety of NAD to yield NADP. The chain is NAD kinase from Teredinibacter turnerae (strain ATCC 39867 / T7901).